Consider the following 1151-residue polypeptide: Elicitor of plant defense protein 1 (1151 aa).

3 disordered regions span residues 22–130 (YQDP…TLGE), 178–197 (ERIRAEESDSGRLSPLRSIK), and 236–255 (NYNSVIPPPEPLNTDPDMHP). Residues 39–49 (IIEDGEPEDEW) show a composition bias toward acidic residues. Over residues 64 to 99 (QNSASRLSKMSLTERFSIQTLDDTDGNTKSNRSSAT) the composition is skewed to polar residues. Low complexity predominate over residues 104–122 (NPPDFSNGNDDSNGNSQNP). A compositionally biased stretch (basic and acidic residues) spans 178-187 (ERIRAEESDS). Residues 242–500 (PPPEPLNTDP…NLCTEAFNPL (259 aa)) form the uDENN domain. The cDENN domain maps to 524 to 656 (EIPGSRTIDI…ARRKLMSLLQ (133 aa)). The dDENN domain maps to 658–1019 (AAPHKLRYGV…DREMQPANDA (362 aa)). Composition is skewed to polar residues over residues 695 to 711 (STPKSTLGKWVSQSSSG) and 744 to 760 (TSKSGKTSPQSSVSPVS). The disordered stretch occupies residues 695 to 809 (STPKSTLGKW…SSSFGVDKHP (115 aa)). The segment covering 784–798 (LREKRSGHFGEEKMR) has biased composition (basic and acidic residues). Residues 886–934 (GHCFNYMPKDNTSMCTICNDLAEGDGVYRCTGCKIVSHGRCLGYCSLIC) form a Phorbol-ester/DAG-type zinc finger.

Belongs to the EPD1 elicitor family.

Its subcellular location is the secreted. It localises to the host cell. Functionally, acts as an elicitor that triggers cell death and defense responses in the host plants. The chain is Elicitor of plant defense protein 1 from Gibberella zeae (strain ATCC MYA-4620 / CBS 123657 / FGSC 9075 / NRRL 31084 / PH-1) (Wheat head blight fungus).